The chain runs to 161 residues: Peptidyl-prolyl cis-trans isomerase-like 3 (161 aa).

The region spanning 1-154 (MAVTLHTDVG…NDVHIKDITI (154 aa)) is the PPIase cyclophilin-type domain.

Belongs to the cyclophilin-type PPIase family. PPIL3 subfamily.

The catalysed reaction is [protein]-peptidylproline (omega=180) = [protein]-peptidylproline (omega=0). In terms of biological role, PPIases accelerate the folding of proteins. It catalyzes the cis-trans isomerization of proline imidic peptide bonds in oligopeptides. The polypeptide is Peptidyl-prolyl cis-trans isomerase-like 3 (PPIL3) (Gallus gallus (Chicken)).